Consider the following 332-residue polypeptide: Malate dehydrogenase, cytoplasmic (332 aa).

Residues 16–17 (QI), Asp-43, and Gly-90 contribute to the NAD(+) site. Position 99 (Arg-99) interacts with oxaloacetate. Positions 113 and 132 each coordinate NAD(+). Asn-132, Arg-163, His-188, and Ser-243 together coordinate oxaloacetate. Residue His-188 is the Proton acceptor of the active site.

It belongs to the LDH/MDH superfamily. MDH type 2 family. As to quaternary structure, homodimer.

The protein resides in the cytoplasm. The enzyme catalyses (S)-malate + NAD(+) = oxaloacetate + NADH + H(+). The protein is Malate dehydrogenase, cytoplasmic (CMDH) of Medicago sativa (Alfalfa).